A 292-amino-acid chain; its full sequence is NAD kinase (292 aa).

The active-site Proton acceptor is Asp73. NAD(+) is bound by residues 73–74 (DG), 147–148 (NE), His158, Arg175, Asp177, 188–193 (TAYSLS), and Gln247.

This sequence belongs to the NAD kinase family. Requires a divalent metal cation as cofactor.

It is found in the cytoplasm. The enzyme catalyses NAD(+) + ATP = ADP + NADP(+) + H(+). In terms of biological role, involved in the regulation of the intracellular balance of NAD and NADP, and is a key enzyme in the biosynthesis of NADP. Catalyzes specifically the phosphorylation on 2'-hydroxyl of the adenosine moiety of NAD to yield NADP. This Klebsiella pneumoniae subsp. pneumoniae (strain ATCC 700721 / MGH 78578) protein is NAD kinase.